The following is a 103-amino-acid chain: Carboxysome shell protein CcmK2 (103 aa).

Residues 4–90 enclose the BMC domain; that stretch reads AVGMIETRGF…PHENLEYVLP (87 aa).

Belongs to the bacterial microcompartments protein family. CcmK subfamily. In terms of assembly, homohexamer, might also make dodecamers. Interacts with full-length CcmM. Forms mixed heterohexamers of all possible stoichiometries with CcmK1, which might form dodecamers. Only very weak interactions with CcmK3 and CcmK4 were seen.

Its subcellular location is the carboxysome. One of the shell proteins of the carboxysome, a polyhedral inclusion where RuBisCO (ribulose bisphosphate carboxylase, rbcL-rbcS) is sequestered. The central pore probably regulates metabolite flux. Hexamers make sheets that form the facets of the polyhedral carboxysome. The sequence is that of Carboxysome shell protein CcmK2 from Synechocystis sp. (strain ATCC 27184 / PCC 6803 / Kazusa).